The chain runs to 540 residues: Hexose transporter HXT14 (540 aa).

Over 1–56 (MTAQIPYQHSSGYISHFHNNELDAGRGRDYNVTIKYLDDKEENIEGQAAKISHNAS) the chain is Cytoplasmic. Residues 57–76 (LHIPVLLCLVISLGGFIFGW) form a helical membrane-spanning segment. Over 77–119 (DIGTIGGMTNMVSFQEKFGTTNIIHDDETIFVSTKKLTDLQIG) the chain is Extracellular. The chain crosses the membrane as a helical span at residues 120 to 140 (LIISIFNISCGVGALTLSKIG). Over 141–146 (DWIGRK) the chain is Cytoplasmic. A helical membrane pass occupies residues 147–167 (GGIWFALVVYCIGITIQILSY). Topologically, residues 168 to 177 (GRWYFLTLGR) are extracellular. Residues 178 to 198 (AVTGIGVGVTTVLVPMFLSEN) traverse the membrane as a helical segment. The Cytoplasmic portion of the chain corresponds to 199 to 204 (SPLKIR). The helical transmembrane segment at 205–225 (GSMVSTYQLIVTFGILMGNIL) threads the bilayer. The Extracellular segment spans residues 226–243 (NFICERCYKDPTQNIAWQ). The chain crosses the membrane as a helical span at residues 244 to 264 (LPLFLGYIWAIIIGMSLVYVP). Over 265–357 (ESPQYLAKIK…IMAFQQLSGI (93 aa)) the chain is Cytoplasmic. Residues 358-374 (NYFFYYGTSVFKGVGIK) form a helical membrane-spanning segment. The Extracellular segment spans residues 375-380 (DPYITS). A helical membrane pass occupies residues 381-398 (IILSSVNFLSTILGIYYV). Residues 399 to 405 (EKWGHKT) are Cytoplasmic-facing. Residues 406–426 (CLLYGSTNLLFYMMTYATVGT) form a helical membrane-spanning segment. The Extracellular segment spans residues 427 to 440 (FGRETDFSNIVLII). The chain crosses the membrane as a helical span at residues 441 to 461 (VTCCFIFWFAITLGPVTFVLV). Over 462 to 478 (SELFPLRTRAISMAICT) the chain is Cytoplasmic. The helical transmembrane segment at 479-499 (FINWMFNFLISLLTPMIVSKI) threads the bilayer. D500 is a topological domain (extracellular). A helical transmembrane segment spans residues 501–521 (FKLGYIFAACLLALIIFSWIL). The Cytoplasmic segment spans residues 522–540 (VPETRKKNEQEINKIFEPE).

It belongs to the major facilitator superfamily. Sugar transporter (TC 2.A.1.1) family.

Its subcellular location is the membrane. Probable glucose transporter. This is Hexose transporter HXT14 (HXT14) from Saccharomyces cerevisiae (strain ATCC 204508 / S288c) (Baker's yeast).